The sequence spans 167 residues: uncharacterized protein (167 aa).

The helical transmembrane segment at 5–27 (LILLTFVSFVFSKTFYYDVYVFF) threads the bilayer.

Its subcellular location is the membrane. This is an uncharacterized protein from Aquifex aeolicus (strain VF5).